We begin with the raw amino-acid sequence, 123 residues long: Large ribosomal subunit protein bL12 (123 aa).

Belongs to the bacterial ribosomal protein bL12 family. As to quaternary structure, homodimer. Part of the ribosomal stalk of the 50S ribosomal subunit. Forms a multimeric L10(L12)X complex, where L10 forms an elongated spine to which 2 to 4 L12 dimers bind in a sequential fashion. Binds GTP-bound translation factors.

Functionally, forms part of the ribosomal stalk which helps the ribosome interact with GTP-bound translation factors. Is thus essential for accurate translation. The sequence is that of Large ribosomal subunit protein bL12 from Rhodopseudomonas palustris (strain HaA2).